The following is a 1183-amino-acid chain: MNPHGGGNQMREPALPAAVGAELERLEARLGQLACAEARRQLAELGEPAAARVLRAIGEARQVRTLSGFIRHMANQERMKRNARGIPTAHSAACISGPCREEESISTPLYYNEVQMDAQTPNDMVEVGSPNQQMPLRLHDNGGSVGHIARVVPDLANPAVGSPYGRISSVLLQNQNCVEGYTPSRGMVSPASNQVGSPGHRMPSGLQRHMEIDSPIQPIVSTPERVSTPSPVRDLSRCVENMAGPSGSPPCPIWVMPQIPPAICPDTTNVLREVVSPQMLALGELEFRKIFMIFAYLSWNKKGVKPPLSTPKSSKIEDVLSVDSIRSLKSMSMAQFESRIWSTFGHDNISSSDRAKNLDSGPGMSKVYHCNVEIRGGTVVKIFKGPYIENRRTHLQKVLGDDNVLVVKFMEISSDTETDLSTYLEHYHKVAEEGIVLGLRCYRFFLYKDGGKENKMKEENREEENKKCTSSVRCYFVRTESGWNMDEPYILSGRTIGQARDLFMHIRTVLTLAKYMLRFALIVSKTITLDVDLSEVLVKLIDDEPCLDEHGKEVFRDGERLIHTDGTGLISEDLAQKCTYSNSKGKLLEPQDIVDCAASKLMGSNNTTEYPLLIQLRLFYNGSAVKGTVLVDKRLPPRTIHIRPSMLKIKTYPELSGVQSVNSLDIVSARNAKKSLSGVQSVNSFEIVSTSNRSGRTFTSNNLIALLHYGGVPEEFFMELLQTAIEEADNARFDYAGALNIAFNYADMEDSMPARMILSGIPLEESYLQSRLDFLSLLERKGIKNGKIPIDDCYYLMGTADPTGKLGPNEVCVILDYGQVSGDVLVYKYPGLHPGDIHVLKATYSSDIEKVVGNSKHAILFPTTGQRSLADEMANSDFDGDIYWVSLNPKLLEHFKPSKPWVPAITPNGTKQKGPEDFNESELERVLFHEFLKTRFAPSYARATAATNWLVYMDRLLTVSLDESEKKLIEKKMLKLVDLYYLALDAPKMGNKVNIPRDLMVKQYPHFMDRSPSYHSSSILGKIYDKAGDPKPLRSDNVQPTSISSLPCFAERDVPPAIKQLWQHRYNEYLADSSLLYAEEADEEEKKIKFQELYEKYKHLLYGASEFEETPRDLDDVFSEACAIYQIAYEKARSANNVARCGFAWKVAGRALCHFYTVKNEGNAVVCSLQLLRNFRFTKKYRK.

The protein belongs to the RdRP family. Expressed in shoot apical meristem (SAM) and panicles.

It catalyses the reaction RNA(n) + a ribonucleoside 5'-triphosphate = RNA(n+1) + diphosphate. Probably involved in the RNA silencing pathway and required for the generation of small interfering RNAs (siRNAs). The sequence is that of Probable RNA-dependent RNA polymerase 4 (RDR4) from Oryza sativa subsp. japonica (Rice).